Consider the following 100-residue polypeptide: Putative septation protein SpoVG (100 aa).

It belongs to the SpoVG family.

Could be involved in septation. The polypeptide is Putative septation protein SpoVG (Staphylococcus haemolyticus (strain JCSC1435)).